The chain runs to 475 residues: Probable sensor histidine kinase TcrY (475 aa).

The Extracellular portion of the chain corresponds to 1-153 (MGITAATEMA…NVDATMLQML (153 aa)). A helical transmembrane segment spans residues 154–174 (IIFGIVTVIALVAATTAGIVI). At 175-475 (IKRALAPLRR…GWQPLESSPR (301 aa)) the chain is on the cytoplasmic side. One can recognise an HAMP domain in the interval 176 to 238 (KRALAPLRRV…MLDHIAAALS (63 aa)). Residues 253–466 (DASHELRTPL…EFAVRLPLDG (214 aa)) enclose the Histidine kinase domain. His256 is subject to Phosphohistidine; by autocatalysis.

Homodimer. Requires a divalent metal cation as cofactor. In terms of processing, autophosphorylated.

It localises to the cell membrane. It catalyses the reaction ATP + protein L-histidine = ADP + protein N-phospho-L-histidine.. In terms of biological role, member of the two-component regulatory system TcrY/TcrX. Activates TcrX by phosphorylation. The sequence is that of Probable sensor histidine kinase TcrY (tcrY) from Mycobacterium tuberculosis (strain ATCC 25618 / H37Rv).